The sequence spans 63 residues: Large ribosomal subunit protein bL28 (63 aa).

This sequence belongs to the bacterial ribosomal protein bL28 family.

In Mycoplasmopsis synoviae (strain 53) (Mycoplasma synoviae), this protein is Large ribosomal subunit protein bL28.